The primary structure comprises 305 residues: Elongation factor Ts, mitochondrial (305 aa).

Belongs to the EF-Ts family.

It is found in the mitochondrion. In terms of biological role, associates with the EF-Tu.GDP complex and induces the exchange of GDP to GTP. It remains bound to the aminoacyl-tRNA.EF-Tu.GTP complex up to the GTP hydrolysis stage on the ribosome. The sequence is that of Elongation factor Ts, mitochondrial (tsfm) from Danio rerio (Zebrafish).